Consider the following 291-residue polypeptide: Trimeric intracellular cation channel type B (291 aa).

Topologically, residues 1–16 (MEYPWDDLTLAFSRTS) are lumenal. Residues 17 to 33 (MFPFFDIAHYLVSVMAL) form a helical membrane-spanning segment. The Cytoplasmic segment spans residues 34–47 (KQRPGAVAAAWSNP). The helical transmembrane segment at 48 to 69 (LSSWLSAMLHCFGGGILSCILL) threads the bilayer. Topologically, residues 70–80 (AEPPLKFLTNH) are lumenal. Residues 81–99 (TNILLASSIWYIVFFCPRD) traverse the membrane as a helical segment. Over 100 to 103 (LVSQ) the chain is Cytoplasmic. A helical transmembrane segment spans residues 104–122 (GYSYQPIQLLAAGMKEVTR). Residues Lys118 and Arg122 each contribute to the a 1,2-diacyl-sn-glycero-3-phospho-(1D-myo-inositol-4,5-bisphosphate) site. Residues 123 to 138 (TWKIVGGVAHANGYYR) are Lumenal-facing. A helical transmembrane segment spans residues 139-156 (NGWIVMIAVGWARGAGGA). Residues 157 to 179 (IITACEQLLKGDWKPEGDEWLKM) are Cytoplasmic-facing. A helical transmembrane segment spans residues 180–197 (SFPCKVTLLGSIMFTFQH). Residues 198–206 (TRHLAISKH) are Lumenal-facing. A helical membrane pass occupies residues 207-225 (DLMFLYTIFLVTIKVTMMM). Over 226–291 (TKDAAVTLTP…SAKRHAKKED (66 aa)) the chain is Cytoplasmic. A disordered region spans residues 254 to 291 (LSEKKAEVKPSSNGSASSASKRGTEPPSSAKRHAKKED). Residues 264 to 273 (SSNGSASSAS) are compositionally biased toward low complexity.

Belongs to the TMEM38 family. Homotrimer; conformation seems to be controled by binding to diacylglycerol (DAG).

The protein resides in the endoplasmic reticulum membrane. The enzyme catalyses K(+)(in) = K(+)(out). Its activity is regulated as follows. Channel activity is activated by increased cytosolic Ca(2+) levels and blocked by luminal high Ca(2+) levels. In terms of biological role, intracellular monovalent cation channel required for maintenance of rapid intracellular calcium release. Acts as a potassium counter-ion channel that functions in synchronization with calcium release from intracellular stores. Activated by increased cytosolic Ca(2+) levels. This chain is Trimeric intracellular cation channel type B (Tmem38b), found in Rattus norvegicus (Rat).